The following is a 220-amino-acid chain: UPF0758 protein APL_1970 (220 aa).

The MPN domain maps to 98–220 (NINEPYLAVM…YFSFEEEKFR (123 aa)). Zn(2+) is bound by residues histidine 169, histidine 171, and aspartate 182. Residues 169–182 (HNHPSGNCTPSESD) carry the JAMM motif motif.

It belongs to the UPF0758 family.

This Actinobacillus pleuropneumoniae serotype 5b (strain L20) protein is UPF0758 protein APL_1970.